Consider the following 1101-residue polypeptide: Protein unc-13 homolog (1101 aa).

The MHD1 domain occupies 663 to 804 (VSVFPAADSL…ASKDDLVPPV (142 aa)). The 111-residue stretch at 941–1051 (QSRLEGLIEA…YETRELIDDL (111 aa)) folds into the MHD2 domain.

The protein belongs to the unc-13 family. As to expression, expressed in roots, cotyledons, leaves, stems and flowers. Expressed in guard cells and mesophyll cells of leaves.

Its subcellular location is the cytoplasm. The protein localises to the cell membrane. Functionally, controls the tethering of the proton ATPase AHA1 to the plasma membrane. Is essential for stomatal opening in response to low concentration of carbon dioxide and light. In Arabidopsis thaliana (Mouse-ear cress), this protein is Protein unc-13 homolog.